Here is a 422-residue protein sequence, read N- to C-terminus: Adenosylhomocysteinase (422 aa).

Asp-129 and Glu-154 together coordinate substrate. 155–157 contacts NAD(+); that stretch reads TTT. Residues Lys-184 and Asp-188 each contribute to the substrate site. NAD(+)-binding positions include Asn-189, 218-223, Glu-241, Asn-276, 297-299, and Asn-344; these read GYGWCG and AGH.

This sequence belongs to the adenosylhomocysteinase family. NAD(+) is required as a cofactor.

The protein resides in the cytoplasm. It carries out the reaction S-adenosyl-L-homocysteine + H2O = L-homocysteine + adenosine. Its pathway is amino-acid biosynthesis; L-homocysteine biosynthesis; L-homocysteine from S-adenosyl-L-homocysteine: step 1/1. May play a key role in the regulation of the intracellular concentration of adenosylhomocysteine. This chain is Adenosylhomocysteinase, found in Pyrococcus abyssi (strain GE5 / Orsay).